Here is a 771-residue protein sequence, read N- to C-terminus: Solute carrier family 7 member 14 (771 aa).

6 helical membrane-spanning segments follow: residues L58 to V78, A83 to V103, A119 to L141, Y187 to V207, V216 to I236, and W251 to I271. N282 is a glycosylation site (N-linked (GlcNAc...) asparagine). A run of 4 helical transmembrane segments spans residues A291–V311, F336–P356, P384–L404, and L407–L427. Phosphoserine occurs at positions 465, 468, 475, and 488. 4 helical membrane-spanning segments follow: residues V565–F585, W596–L616, M628–L648, and W655–W675. Residue N676 is glycosylated (N-linked (GlcNAc...) asparagine). The interval S735 to E771 is disordered. Over residues S745 to K754 the composition is skewed to basic residues. Residues S757 and S769 each carry the phosphoserine modification.

The protein belongs to the amino acid-polyamine-organocation (APC) superfamily. In terms of tissue distribution, expressed in retina, brain and spinal cord. In the retina, expressed in the inner nuclear layer and photoreceptor layer (at protein level). Expressed in liver, spleen, lung, kidney intestine and brain (at protein level).

Its subcellular location is the lysosome membrane. It catalyses the reaction 4-aminobutanoate(in) = 4-aminobutanoate(out). Its function is as follows. Imports 4-aminobutanoate (GABA) into lysosomes. May act as a GABA sensor that regulates mTORC2-dependent INS signaling and gluconeogenesis. The transport mechanism and substrate selectivity remain to be elucidated. This chain is Solute carrier family 7 member 14, found in Mus musculus (Mouse).